A 213-amino-acid polypeptide reads, in one-letter code: Ribonuclease HII (213 aa).

The 187-residue stretch at 27 to 213 (HAVAGVDEAG…FRGVKEHVAP (187 aa)) folds into the RNase H type-2 domain. Residues D33, E34, and D125 each coordinate a divalent metal cation.

The protein belongs to the RNase HII family. Mn(2+) serves as cofactor. Requires Mg(2+) as cofactor.

It is found in the cytoplasm. The catalysed reaction is Endonucleolytic cleavage to 5'-phosphomonoester.. Functionally, endonuclease that specifically degrades the RNA of RNA-DNA hybrids. This chain is Ribonuclease HII, found in Geobacter metallireducens (strain ATCC 53774 / DSM 7210 / GS-15).